Here is a 344-residue protein sequence, read N- to C-terminus: MEDSGKTFESEEEETNYWRDLAMTYKQRAENTQEELREFQEGSREYEAELEAQLQQIETRNRDLLSENNRLRMELESVKEKFEMQHSEGYRQISALEDDLAQTKAIKDQLQKYIRELEQANDDLERAKRATIMSLEDFEQRLNQAIERNAFLESELDEKENLLESVQRLKDEARDLRQELAVQQKQDKPRTPMPGSGQAKRTDMAVQATGSVPSTPVAHRGPSSGLNTPGMFRRGLDSSTSGTPLTPAARISALNIVGDLLRKVGALESKLASCRNFMYDQSPSRTSGPASGRGTKNRDGVDRRPGSTSVGDKGSGKRLEFGKPASEPASPALPSAQGVVKLLL.

Residues 1-93 (MEDSGKTFES…MQHSEGYRQI (93 aa)) form a self-association region. The stretch at 18–188 (WRDLAMTYKQ…ELAVQQKQDK (171 aa)) forms a coiled coil. Positions 88–156 (EGYRQISALE…ERNAFLESEL (69 aa)) are interaction with PAFAH1B1. The interval 167–290 (QRLKDEARDL…QSPSRTSGPA (124 aa)) is interaction with CENPF. Positions 181–246 (AVQQKQDKPR…DSSTSGTPLT (66 aa)) are disordered. Ser-211 is modified (phosphoserine). A phosphothreonine mark is found at Thr-215 and Thr-228. Ser-239 carries the post-translational modification Phosphoserine. 2 positions are modified to phosphothreonine: Thr-243 and Thr-246. A lipid anchor (S-palmitoyl cysteine; by ZDHHC2, ZDHHC3 and ZDHHC7) is attached at Cys-274. The span at 279–289 (YDQSPSRTSGP) shows a compositional bias: polar residues. The segment at 279–337 (YDQSPSRTSGPASGRGTKNRDGVDRRPGSTSVGDKGSGKRLEFGKPASEPASPALPSAQ) is disordered. Phosphoserine is present on Ser-282. Residues 296-305 (KNRDGVDRRP) are compositionally biased toward basic and acidic residues. Ser-309 carries the phosphoserine modification. Positions 324–336 (PASEPASPALPSA) are enriched in low complexity.

This sequence belongs to the nudE family. As to quaternary structure, homodimer. Interacts with dynactin and PCM1. Interacts with CENPF, LIS1, CNTRL, dynein, tubulin gamma, PAFAH1B1, PCNT, SLMAP and TCP1. Interacts with ZNF365. Interacts with RAB9A; the interaction leads to RAB9A-dynein motor tethering. Interacts (via C-terminus) with MCRS1 (via C-terminus); phosphorylation of NDE1 inhibits the interaction. Post-translationally, phosphorylated in mitosis. Phosphorylation at Thr-246 is essential for the G2/M transition. Highly expressed in ovary. Also expressed in brain, heart, kidney, large intestine, liver, lung, small intestine and testis.

It localises to the cytoplasm. It is found in the cytoskeleton. The protein localises to the microtubule organizing center. Its subcellular location is the centrosome. The protein resides in the spindle. It localises to the chromosome. It is found in the centromere. The protein localises to the kinetochore. Its subcellular location is the cleavage furrow. The protein resides in the cytoplasmic vesicle membrane. Required for centrosome duplication and formation and function of the mitotic spindle. Essential for the development of the cerebral cortex. May regulate the production of neurons by controlling the orientation of the mitotic spindle during division of cortical neuronal progenitors of the proliferative ventricular zone of the brain. Orientation of the division plane perpendicular to the layers of the cortex gives rise to two proliferative neuronal progenitors whereas parallel orientation of the division plane yields one proliferative neuronal progenitor and a postmitotic neuron. A premature shift towards a neuronal fate within the progenitor population may result in an overall reduction in the final number of neurons and an increase in the number of neurons in the deeper layers of the cortex. Acts as a RAB9A/B effector that tethers RAB9-associated late endosomes to the dynein motor for their retrograde transport to the trans-Golgi network. In Mus musculus (Mouse), this protein is Nuclear distribution protein nudE homolog 1.